The following is a 723-amino-acid chain: Catalase-peroxidase (723 aa).

The first 29 residues, 1–29, serve as a signal peptide directing secretion; that stretch reads MDGNDLVENKCPVMHGGITVAGHSNTAWW. Positions 97 to 225 form a cross-link, tryptophyl-tyrosyl-methioninium (Trp-Tyr) (with M-251); the sequence is WHSAGSYRLA…LAAVQMGLIY (129 aa). H98 functions as the Proton acceptor in the catalytic mechanism. The tryptophyl-tyrosyl-methioninium (Tyr-Met) (with W-97) cross-link spans 225-251; it reads YVNPEGVNGKSDPLKSAAQVRETFARM. Residue H266 participates in heme b binding.

This sequence belongs to the peroxidase family. Peroxidase/catalase subfamily. In terms of assembly, homodimer or homotetramer. The cofactor is heme b. In terms of processing, formation of the three residue Trp-Tyr-Met cross-link is important for the catalase, but not the peroxidase activity of the enzyme.

The enzyme catalyses H2O2 + AH2 = A + 2 H2O. It carries out the reaction 2 H2O2 = O2 + 2 H2O. In terms of biological role, bifunctional enzyme with both catalase and broad-spectrum peroxidase activity. The protein is Catalase-peroxidase of Hyphomonas neptunium (strain ATCC 15444).